Reading from the N-terminus, the 277-residue chain is Phosphatidylglycerol--prolipoprotein diacylglyceryl transferase (277 aa).

Transmembrane regions (helical) follow at residues 16-36 (LGPIVIRWYALAYLAGFLFGW), 58-78 (FLTWAIVGVLLGGRLGFVLFY), 93-113 (IWSGGMSFHGGLTGIVAAILL), and 119-139 (GFSPFALGDLVAVAGPVGLFL). Arginine 141 lines the a 1,2-diacyl-sn-glycero-3-phospho-(1'-sn-glycerol) pocket. A run of 3 helical transmembrane segments spans residues 182–202 (AALEGLVLFAVLAWLASKPAV), 207–227 (GTLSGTFLVGYGIARILGEVF), and 239–259 (FGVTMGQILSVPMVLIGLWIL).

It belongs to the Lgt family.

It localises to the cell inner membrane. It carries out the reaction L-cysteinyl-[prolipoprotein] + a 1,2-diacyl-sn-glycero-3-phospho-(1'-sn-glycerol) = an S-1,2-diacyl-sn-glyceryl-L-cysteinyl-[prolipoprotein] + sn-glycerol 1-phosphate + H(+). It functions in the pathway protein modification; lipoprotein biosynthesis (diacylglyceryl transfer). Functionally, catalyzes the transfer of the diacylglyceryl group from phosphatidylglycerol to the sulfhydryl group of the N-terminal cysteine of a prolipoprotein, the first step in the formation of mature lipoproteins. The chain is Phosphatidylglycerol--prolipoprotein diacylglyceryl transferase from Rhodospirillum centenum (strain ATCC 51521 / SW).